Reading from the N-terminus, the 735-residue chain is Rho GTPase-activating protein SYDE1 (735 aa).

The tract at residues 1–253 is disordered; sequence MAEPLLRKTF…SPTSFRPYEV (253 aa). Over residues 14-31 the composition is skewed to basic and acidic residues; that stretch reads RGREKLPRKKSDAKERGH. Positions 35 to 46 are enriched in pro residues; it reads RPEPSPPEPEPQ. A compositionally biased stretch (low complexity) spans 47–71; the sequence is APEGSQAGAEGPSSPEASRSPARGA. Pro residues predominate over residues 122–131; it reads PPAPEPPGPQ. Residues 211-221 are compositionally biased toward gly residues; it reads GGPGPAAGPGG. Ser224, Ser231, Ser235, and Ser244 each carry phosphoserine. Residues 249 to 366 form the C2 domain; that stretch reads RPYEVGPAAR…FRGCQAQQLA (118 aa). Residues 398–604 enclose the Rho-GAP domain; that stretch reads LPLPLLVERE…YLLQSWPDPR (207 aa). Position 575 is a phosphoserine (Ser575). 2 disordered regions span residues 608 to 651 and 674 to 696; these read QSPD…SNRY and DYDH…PRVT. Phosphoserine is present on residues Ser681 and Ser683.

In terms of processing, palmitoylated. Probably palmitoylated by ZDHHC3 and ZDHHC7. Expressed in trophoblast cells of placental villi.

Functionally, GTPase activator for the Rho-type GTPases. As a GCM1 downstream effector, it is involved in placental development and positively regulates trophoblast cells migration. It regulates cytoskeletal remodeling by controlling the activity of Rho GTPases including RHOA, CDC42 and RAC1. The polypeptide is Rho GTPase-activating protein SYDE1 (SYDE1) (Homo sapiens (Human)).